The primary structure comprises 463 residues: Kynurenine 3-monooxygenase (463 aa).

This sequence belongs to the aromatic-ring hydroxylase family. KMO subfamily. FAD is required as a cofactor.

The protein resides in the mitochondrion outer membrane. The enzyme catalyses L-kynurenine + NADPH + O2 + H(+) = 3-hydroxy-L-kynurenine + NADP(+) + H2O. The protein operates within cofactor biosynthesis; NAD(+) biosynthesis; quinolinate from L-kynurenine: step 1/3. Functionally, catalyzes the hydroxylation of L-kynurenine (L-Kyn) to form 3-hydroxy-L-kynurenine (L-3OHKyn). Required for synthesis of quinolinic acid. The protein is Kynurenine 3-monooxygenase of Yarrowia lipolytica (strain CLIB 122 / E 150) (Yeast).